A 532-amino-acid chain; its full sequence is Vesicular acetylcholine transporter (532 aa).

The Cytoplasmic segment spans residues 1–33; the sequence is MESAEPAGQARAAATKLSEAVGAALQEPRRQRR. Residues 34–54 form a helical membrane-spanning segment; that stretch reads LVLVIVCVALLLDNMLYMVIV. Residues 55–125 are Lumenal, vesicle-facing; the sequence is PIVPDYIAHM…PTESEDVKIG (71 aa). N89 and N96 each carry an N-linked (GlcNAc...) asparagine glycan. A helical membrane pass occupies residues 126–146; the sequence is VLFASKAILQLLVNPLSGPFI. The Cytoplasmic portion of the chain corresponds to 147–152; the sequence is DRMSYD. A helical membrane pass occupies residues 153 to 173; the sequence is VPLLIGLGVMFASTVLFAFAE. Topologically, residues 174 to 182 are lumenal, vesicle; that stretch reads DYATLFAAR. The chain crosses the membrane as a helical span at residues 183 to 203; the sequence is SLQGLGSAFADTSGIAMIADK. Topologically, residues 204–213 are cytoplasmic; the sequence is YPEEPERSRA. Residues 214–234 traverse the membrane as a helical segment; sequence LGVALAFISFGSLVAPPFGGI. At 235 to 242 the chain is on the lumenal, vesicle side; that stretch reads LYEFAGKR. Residues 243–263 traverse the membrane as a helical segment; the sequence is VPFLVLAAVSLFDALLLLAVA. The Cytoplasmic segment spans residues 264-289; the sequence is KPFSAAARARANLPVGTPIHRLMLDP. The helical transmembrane segment at 290 to 310 threads the bilayer; it reads YIAVVAGALTTCNIPLAFLEP. Residues 311 to 325 are Lumenal, vesicle-facing; sequence TIATWMKHTMAASEW. The chain crosses the membrane as a helical span at residues 326–346; it reads EMGMAWLPAFVPHVLGVYLTV. Residues 347–356 are Cytoplasmic-facing; that stretch reads RLAARYPHLQ. A helical transmembrane segment spans residues 357-377; sequence WLYGALGLAVIGASSCIVPAC. Residues 378-388 are Lumenal, vesicle-facing; that stretch reads RSFAPLVVSLC. Residues 389-409 traverse the membrane as a helical segment; the sequence is GLCFGIALVDTALLPTLAFLV. Over 410-422 the chain is Cytoplasmic; it reads DVRHVSVYGSVYA. A helical transmembrane segment spans residues 423–443; sequence IADISYSVAYALGPIVAGHIV. At 444–447 the chain is on the lumenal, vesicle side; sequence HSLG. The helical transmembrane segment at 448–468 threads the bilayer; it reads FEQLSLGMGLANLLYAPVLLL. At 469 to 532 the chain is on the cytoplasmic side; sequence LRNVGLLTRS…DDYNYYYTRS (64 aa). The segment at 471–532 is mediates interaction with SEC14L1; the sequence is NVGLLTRSRS…DDYNYYYTRS (62 aa). Residues 502 to 523 are disordered; the sequence is RPVSGQDGEPRSPPGPFDACED.

It belongs to the major facilitator superfamily. Vesicular transporter family. As to quaternary structure, interacts with SEC14L1. In terms of tissue distribution, peripheral and central cholinergic nervous systems.

It is found in the cytoplasmic vesicle. It localises to the secretory vesicle. Its subcellular location is the synaptic vesicle membrane. It catalyses the reaction acetylcholine(out) + 2 H(+)(in) = acetylcholine(in) + 2 H(+)(out). It carries out the reaction choline(in) + 2 H(+)(out) = choline(out) + 2 H(+)(in). The catalysed reaction is serotonin(in) + 2 H(+)(out) = serotonin(out) + 2 H(+)(in). With respect to regulation, potently inhibited by L-vesamicol, reserpine and tetrabenazine. Electrogenic antiporter that exchanges one cholinergic neurotransmitter, acetylcholine or choline, with two intravesicular protons across the membrane of synaptic vesicles. Uses the electrochemical proton gradient established by the V-type proton-pump ATPase to store neurotransmitters inside the vesicles prior to their release via exocytosis. Determines cholinergic vesicular quantal size at presynaptic nerve terminals in developing neuro-muscular junctions with an impact on motor neuron differentiation and innervation pattern. Part of forebrain cholinergic system, regulates hippocampal synapse transmissions that underlie spatial memory formation. Can transport serotonin. The polypeptide is Vesicular acetylcholine transporter (SLC18A3) (Homo sapiens (Human)).